We begin with the raw amino-acid sequence, 392 residues long: GDP-mannose transporter (392 aa).

The interval 1 to 40 (MANKRNEDIELGPAEGRGSTDKDPFLARRSSSQPNRPQQA) is disordered. The Cytoplasmic portion of the chain corresponds to 1-55 (MANKRNEDIELGPAEGRGSTDKDPFLARRSSSQPNRPQQAGPFGGYFDKIDHSPG). Residues 29–38 (RSSSQPNRPQ) show a composition bias toward polar residues. A helical transmembrane segment spans residues 56 to 76 (ASIIAYCLSSISMTVVNKYVV). The Lumenal segment spans residues 77-80 (SGSE). A helical transmembrane segment spans residues 81 to 101 (WNLNFFYLAVQSLVCTAAILI). At 102–121 (CKQLGMFQNLAAFDSTKAKK) the chain is on the cytoplasmic side. The helical transmembrane segment at 122–144 (WFPISLLLVGMIYTSTKALQFLS) threads the bilayer. Topologically, residues 145–149 (VPVYT) are lumenal. Residues 150-168 (IFKNLTIIVVAYGEVLWFG) traverse the membrane as a helical segment. At 169-174 (GSVTPM) the chain is on the cytoplasmic side. A helical membrane pass occupies residues 175 to 198 (ALLSFGLMVLSSVIAAWADIQAAV). Residues 199–213 (EGVGHTAEATDAIST) are Lumenal-facing. Residues 214–234 (LNAGYAWMGMNVFCTAAYLLG) form a helical membrane-spanning segment. Residues 235-248 (MRKVIKKMNFKDYD) are Cytoplasmic-facing. Residues 249–269 (TMFYNNLLTIPVLIVFSLLFE) traverse the membrane as a helical segment. Residues 270–287 (DWSNDNLIKNFPVETRNS) lie on the Lumenal side of the membrane. A helical transmembrane segment spans residues 288–308 (LFIGMIYSGLAAIFISYCSAW). The Cytoplasmic portion of the chain corresponds to 309 to 316 (CIRVTSST). Residues 317-337 (TYSMVGALNKLPLAISGLIFF) traverse the membrane as a helical segment. Residues 338-342 (DAPVT) lie on the Lumenal side of the membrane. The helical transmembrane segment at 343–361 (FGSVTAIFVGFVSGLVYTW) threads the bilayer. The Cytoplasmic segment spans residues 362–392 (SKTRQKVSQILPTTQPTMSASAASNRDAANA).

The protein belongs to the TPT transporter family. SLC35D subfamily. As to quaternary structure, homooligomer.

It is found in the golgi apparatus membrane. The protein localises to the cytoplasmic vesicle membrane. The protein resides in the endoplasmic reticulum membrane. Functionally, involved in the import of GDP-mannose from the cytoplasm into the Golgi lumen. This chain is GDP-mannose transporter (vrg-4), found in Neurospora crassa (strain ATCC 24698 / 74-OR23-1A / CBS 708.71 / DSM 1257 / FGSC 987).